The chain runs to 350 residues: WD repeat-containing protein DWA2 (350 aa).

WD repeat units lie at residues 39 to 79 (KEEN…FDQR), 118 to 158 (AHVG…KSAE), 166 to 205 (GMRH…KNNS), 206 to 246 (IERA…FPVQ), 250 to 290 (GHTH…EHKT), and 311 to 350 (DYED…LPRR).

In terms of assembly, interacts with ABI5 and DDB1A and DWA1.

It localises to the nucleus. It functions in the pathway protein modification; protein ubiquitination. In terms of biological role, component of the CUL4-RBX1-DDB1-DWA1/DWA2 E3 ubiquitin-protein ligase complex that acts as a negative regulator in abscisic acid (ABA) signaling. May function as the substrate recognition module within this complex leading to ABI5 degradation. Functionally redundant with DWA1. This Arabidopsis thaliana (Mouse-ear cress) protein is WD repeat-containing protein DWA2 (DWA2).